A 63-amino-acid polypeptide reads, in one-letter code: MKIIYIILGFLSLAIGIIGIFPSSFAYHAFFITYFIFLHKRFKTLRTMVFRHKYLSKTSQVLS.

The chain crosses the membrane as a helical span at residues Ile-3–Ser-23.

It localises to the membrane. This is an uncharacterized protein from Haemophilus influenzae (strain ATCC 51907 / DSM 11121 / KW20 / Rd).